A 420-amino-acid chain; its full sequence is UDP-N-acetylglucosamine 1-carboxyvinyltransferase 2 (420 aa).

22–23 (KN) contributes to the phosphoenolpyruvate binding site. R92 contributes to the UDP-N-acetyl-alpha-D-glucosamine binding site. The Proton donor role is filled by C116. A 2-(S-cysteinyl)pyruvic acid O-phosphothioketal modification is found at C116. Residues 121–125 (RPIDL), D307, and I329 each bind UDP-N-acetyl-alpha-D-glucosamine.

This sequence belongs to the EPSP synthase family. MurA subfamily.

Its subcellular location is the cytoplasm. The enzyme catalyses phosphoenolpyruvate + UDP-N-acetyl-alpha-D-glucosamine = UDP-N-acetyl-3-O-(1-carboxyvinyl)-alpha-D-glucosamine + phosphate. It participates in cell wall biogenesis; peptidoglycan biosynthesis. In terms of biological role, cell wall formation. Adds enolpyruvyl to UDP-N-acetylglucosamine. This is UDP-N-acetylglucosamine 1-carboxyvinyltransferase 2 from Streptococcus thermophilus (strain ATCC BAA-250 / LMG 18311).